A 148-amino-acid polypeptide reads, in one-letter code: WAP four-disulfide core domain protein 12 (148 aa).

Positions 1-23 are cleaved as a signal peptide; it reads MRSYSFWFLTAFLVFATLALGEA. One can recognise a WAP domain in the interval 27 to 74; it reads GKEKWGNCPAEKGSCIKSGPSQCHADNDCPGDKKCCFLSCSFKCVSPD. 4 disulfide bridges follow: Cys-34/Cys-62, Cys-41/Cys-66, Cys-49/Cys-61, and Cys-55/Cys-70. The tract at residues 74–148 is disordered; that stretch reads DRIRKEGGNE…QEASPQKEWS (75 aa).

Its subcellular location is the secreted. Antibacterial protein. Putative acid-stable proteinase inhibitor. This is WAP four-disulfide core domain protein 12 (WFDC12) from Lemur catta (Ring-tailed lemur).